The following is a 381-amino-acid chain: Galactose-1-phosphate uridylyltransferase (381 aa).

Zn(2+) is bound by residues C65 and C68. A UDP-alpha-D-glucose-binding site is contributed by 90-91 (ND). Residue H131 coordinates Zn(2+). N175 contributes to the UDP-alpha-D-glucose binding site. Zn(2+) is bound at residue H186. H188 (tele-UMP-histidine intermediate) is an active-site residue. Q190 is a UDP-alpha-D-glucose binding site. The Fe cation site is built by E204, H306, H323, and H325. UDP-alpha-D-glucose contacts are provided by residues 338-341 (KFMV) and 343-344 (FE).

The protein belongs to the galactose-1-phosphate uridylyltransferase type 1 family. In terms of assembly, homodimer. Zn(2+) serves as cofactor.

The catalysed reaction is alpha-D-galactose 1-phosphate + UDP-alpha-D-glucose = alpha-D-glucose 1-phosphate + UDP-alpha-D-galactose. Its pathway is carbohydrate metabolism; galactose metabolism. The protein is Galactose-1-phosphate uridylyltransferase (GAL7) of Cryptococcus neoformans var. neoformans serotype D (strain B-3501A) (Filobasidiella neoformans).